The sequence spans 355 residues: Holliday junction branch migration complex subunit RuvB (355 aa).

The large ATPase domain (RuvB-L) stretch occupies residues 1–193 (MGRFSEDSAD…FGFTAHMDFY (193 aa)). ATP-binding positions include Leu-32, Arg-33, Gly-74, Lys-77, Thr-78, Ser-79, 140-142 (EDF), Arg-183, Tyr-193, and Arg-230. Residue Thr-78 coordinates Mg(2+). Positions 194-264 (EPSELERVLA…IAKYALEVYD (71 aa)) are small ATPAse domain (RuvB-S). Residues 267-355 (ELGLDRLDRA…VGLGQTGLFD (89 aa)) are head domain (RuvB-H). Arg-322 and Arg-327 together coordinate DNA.

This sequence belongs to the RuvB family. Homohexamer. Forms an RuvA(8)-RuvB(12)-Holliday junction (HJ) complex. HJ DNA is sandwiched between 2 RuvA tetramers; dsDNA enters through RuvA and exits via RuvB. An RuvB hexamer assembles on each DNA strand where it exits the tetramer. Each RuvB hexamer is contacted by two RuvA subunits (via domain III) on 2 adjacent RuvB subunits; this complex drives branch migration. In the full resolvosome a probable DNA-RuvA(4)-RuvB(12)-RuvC(2) complex forms which resolves the HJ.

Its subcellular location is the cytoplasm. It catalyses the reaction ATP + H2O = ADP + phosphate + H(+). The RuvA-RuvB-RuvC complex processes Holliday junction (HJ) DNA during genetic recombination and DNA repair, while the RuvA-RuvB complex plays an important role in the rescue of blocked DNA replication forks via replication fork reversal (RFR). RuvA specifically binds to HJ cruciform DNA, conferring on it an open structure. The RuvB hexamer acts as an ATP-dependent pump, pulling dsDNA into and through the RuvAB complex. RuvB forms 2 homohexamers on either side of HJ DNA bound by 1 or 2 RuvA tetramers; 4 subunits per hexamer contact DNA at a time. Coordinated motions by a converter formed by DNA-disengaged RuvB subunits stimulates ATP hydrolysis and nucleotide exchange. Immobilization of the converter enables RuvB to convert the ATP-contained energy into a lever motion, pulling 2 nucleotides of DNA out of the RuvA tetramer per ATP hydrolyzed, thus driving DNA branch migration. The RuvB motors rotate together with the DNA substrate, which together with the progressing nucleotide cycle form the mechanistic basis for DNA recombination by continuous HJ branch migration. Branch migration allows RuvC to scan DNA until it finds its consensus sequence, where it cleaves and resolves cruciform DNA. This Mycolicibacterium vanbaalenii (strain DSM 7251 / JCM 13017 / BCRC 16820 / KCTC 9966 / NRRL B-24157 / PYR-1) (Mycobacterium vanbaalenii) protein is Holliday junction branch migration complex subunit RuvB.